A 141-amino-acid chain; its full sequence is Large ribosomal subunit protein uL11 (141 aa).

The protein belongs to the universal ribosomal protein uL11 family. As to quaternary structure, part of the ribosomal stalk of the 50S ribosomal subunit. Interacts with L10 and the large rRNA to form the base of the stalk. L10 forms an elongated spine to which L12 dimers bind in a sequential fashion forming a multimeric L10(L12)X complex. One or more lysine residues are methylated.

Functionally, forms part of the ribosomal stalk which helps the ribosome interact with GTP-bound translation factors. This chain is Large ribosomal subunit protein uL11, found in Acaryochloris marina (strain MBIC 11017).